A 280-amino-acid polypeptide reads, in one-letter code: Large ribosomal subunit protein uL2 (280 aa).

3 disordered regions span residues 1 to 20 (MAIRKYKPTTPGRRASSVSM), 29 to 58 (PEKSLLRPLSKTGGRNSHGHITTRHRGGGH), and 225 to 280 (VMNP…NKKR). The segment covering 45–58 (SHGHITTRHRGGGH) has biased composition (basic residues). A compositionally biased stretch (basic and acidic residues) spans 253-269 (KEGRTRRPKRYSDDMIV). Basic residues predominate over residues 270–280 (RRRRANKNKKR).

The protein belongs to the universal ribosomal protein uL2 family. Part of the 50S ribosomal subunit. Forms a bridge to the 30S subunit in the 70S ribosome.

Functionally, one of the primary rRNA binding proteins. Required for association of the 30S and 50S subunits to form the 70S ribosome, for tRNA binding and peptide bond formation. It has been suggested to have peptidyltransferase activity; this is somewhat controversial. Makes several contacts with the 16S rRNA in the 70S ribosome. The protein is Large ribosomal subunit protein uL2 of Corynebacterium efficiens (strain DSM 44549 / YS-314 / AJ 12310 / JCM 11189 / NBRC 100395).